The primary structure comprises 723 residues: Threonine--tRNA ligase, mitochondrial (723 aa).

Ser-57 carries the post-translational modification Phosphoserine. The region spanning 64 to 126 (RTIKISLPEG…ETDCHLRFLT (63 aa)) is the TGS domain.

The protein belongs to the class-II aminoacyl-tRNA synthetase family. As to quaternary structure, homodimer.

It is found in the mitochondrion matrix. The enzyme catalyses tRNA(Thr) + L-threonine + ATP = L-threonyl-tRNA(Thr) + AMP + diphosphate + H(+). Its function is as follows. Catalyzes the attachment of threonine to tRNA(Thr) in a two-step reaction: threonine is first activated by ATP to form Thr-AMP and then transferred to the acceptor end of tRNA(Thr). Also edits incorrectly charged tRNA(Thr) via its editing domain. The sequence is that of Threonine--tRNA ligase, mitochondrial (Tars2) from Rattus norvegicus (Rat).